The chain runs to 288 residues: Ribosomal RNA small subunit methyltransferase A (288 aa).

6 residues coordinate S-adenosyl-L-methionine: asparagine 18, leucine 20, glycine 45, glutamate 66, aspartate 91, and asparagine 118.

It belongs to the class I-like SAM-binding methyltransferase superfamily. rRNA adenine N(6)-methyltransferase family. RsmA subfamily.

The protein localises to the cytoplasm. The catalysed reaction is adenosine(1518)/adenosine(1519) in 16S rRNA + 4 S-adenosyl-L-methionine = N(6)-dimethyladenosine(1518)/N(6)-dimethyladenosine(1519) in 16S rRNA + 4 S-adenosyl-L-homocysteine + 4 H(+). Specifically dimethylates two adjacent adenosines (A1518 and A1519) in the loop of a conserved hairpin near the 3'-end of 16S rRNA in the 30S particle. May play a critical role in biogenesis of 30S subunits. This Mannheimia succiniciproducens (strain KCTC 0769BP / MBEL55E) protein is Ribosomal RNA small subunit methyltransferase A.